A 243-amino-acid polypeptide reads, in one-letter code: Venom nerve growth factor (243 aa).

Positions M1 to A18 are cleaved as a signal peptide. The propeptide occupies A19–N125. Residues G47–D66 are compositionally biased toward basic and acidic residues. Residues G47–G70 are disordered. Intrachain disulfides connect C139–C204, C182–C232, and C192–C234. N-linked (GlcNAc...) asparagine glycosylation is present at N148.

The protein belongs to the NGF-beta family. In terms of assembly, homodimer. In terms of tissue distribution, expressed by the venom gland.

It is found in the secreted. Functionally, nerve growth factor is important for the development and maintenance of the sympathetic and sensory nervous systems. It stimulates division and differentiation of sympathetic and embryonic sensory neurons as well as basal forebrain cholinergic neurons in the brain. Its relevance in the snake venom is not clear. However, it has been shown to inhibit metalloproteinase-dependent proteolysis of platelet glycoprotein Ib alpha, suggesting a metalloproteinase inhibition to prevent metalloprotease autodigestion and/or protection against prey proteases. Binds a lipid between the two protein chains in the homodimer. The lipid-bound form promotes histamine relase from mouse mast cells, contrary to the lipid-free form. The protein is Venom nerve growth factor of Bungarus multicinctus (Many-banded krait).